We begin with the raw amino-acid sequence, 385 residues long: MNPVPAQREYFLDSIRAWLMLLGIPFHISLIYSSHTWHVNSAEPSLWLTLFNDFIHSFRMQVFFVISGYFSYMLFLRYPLKKWWKVRVERVGIPMLTAIPLLTLPQFIMLQYVKGKAESWPGLSLYDKYNTLAWELISHLWFLLVLVVMTTLCVWIFKRIRNNLENSDKTNKKFSMVKLSVIFLCLGIGYAVIRRTIFIVYPPILSNGTFNFIVMQTLFYLPFFILGALAFIFPHLKALFTTPSRGCTLAAALAFVAYLLNQRYGSGDAWMYETESVITMVLGLWMVNVVFSFGHRLLNFQSARVTYFVNASLFIYLVHHPLTLFFGAYITPHITSNWLGFLCGLIFVVGIAIILYEIHLRIPLLKFLFSGKPVVKRENDKAPAR.

Helical transmembrane passes span 17–39, 54–76, 88–110, 136–158, 179–198, 213–235, 242–261, 276–295, 308–330, and 334–356; these read AWLM…TWHV, FIHS…MLFL, VERV…FIML, LISH…WIFK, LSVI…RTIF, IVMQ…IFPH, TPSR…YLLN, SVIT…SFGH, FVNA…GAYI, and ITSN…IILY.

It belongs to the acyltransferase 3 family. OpgC subfamily.

The protein resides in the cell membrane. It participates in glycan metabolism; osmoregulated periplasmic glucan (OPG) biosynthesis. In terms of biological role, necessary for the succinyl substitution of periplasmic glucans. Could catalyze the transfer of succinyl residues from the cytoplasmic side of the membrane to the nascent glucan backbones on the periplasmic side of the membrane. This is Glucans biosynthesis protein C from Escherichia coli O157:H7.